A 644-amino-acid chain; its full sequence is N-acetylgalactosaminyltransferase 4 (644 aa).

The Cytoplasmic segment spans residues 1–13 (MAIKKRYVKRLLR). A helical; Signal-anchor for type II membrane protein membrane pass occupies residues 14–34 (KVVLLLVVIVTVSLVTTLVVE). The Lumenal segment spans residues 35 to 644 (RRMKNAAELT…MLDTFYDGLK (610 aa)). Residues Asn157 and Asn179 are each glycosylated (N-linked (GlcNAc...) asparagine). The interval 177–288 (LPNISVIFIF…YNWLPPLIEP (112 aa)) is catalytic subdomain A. The substrate site is built by Asp218 and Arg249. Asp272 is a Mn(2+) binding site. Substrate is bound at residue Ser273. His274 is a Mn(2+) binding site. The segment at 345 to 407 (PYRSPVMMGG…PCSRVAHIFR (63 aa)) is catalytic subdomain B. Trp376 contributes to the substrate binding site. Residue His404 coordinates Mn(2+). Arg407 serves as a coordination point for substrate. Residues 496-629 (AAGIIQNVAN…GNDRQRWEFG (134 aa)) enclose the Ricin B-type lectin domain. A disulfide bridge links Cys509 with Cys526. N-linked (GlcNAc...) asparagine glycans are attached at residues Asn529 and Asn565. Cystine bridges form between Cys556–Cys573 and Cys600–Cys617. N-linked (GlcNAc...) asparagine glycosylation occurs at Asn632.

Belongs to the glycosyltransferase 2 family. GalNAc-T subfamily. Mn(2+) is required as a cofactor. In terms of tissue distribution, expressed in developing oocytes and egg chambers. During embryonic stages 9-11, expressed in the primordium of the foregut, midgut and hindgut. During embryonic stages 12-13, shows specific expression in the proventriculus that continues until the end of embryogenesis. In third instar larvae, ubiquitously expressed in wing, eye-antennal, leg and haltere imaginal disks.

The protein localises to the golgi apparatus membrane. It carries out the reaction L-seryl-[protein] + UDP-N-acetyl-alpha-D-galactosamine = a 3-O-[N-acetyl-alpha-D-galactosaminyl]-L-seryl-[protein] + UDP + H(+). It catalyses the reaction L-threonyl-[protein] + UDP-N-acetyl-alpha-D-galactosamine = a 3-O-[N-acetyl-alpha-D-galactosaminyl]-L-threonyl-[protein] + UDP + H(+). The protein operates within protein modification; protein glycosylation. Glycopeptide transferase involved in O-linked oligosaccharide biosynthesis, which catalyzes the transfer of an N-acetyl-D-galactosamine residue to an already glycosylated peptide. In contrast to other proteins of the family, it does not act as a peptide transferase that transfers GalNAc onto serine or threonine residue on the protein receptor, but instead requires the prior addition of a GalNAc on a peptide before adding additional GalNAc moieties. Some peptide transferase activity is however not excluded, considering that its appropriate peptide substrate may remain unidentified. Prefers the diglycosylated Muc5AC-3/13 as substrate. The sequence is that of N-acetylgalactosaminyltransferase 4 from Drosophila melanogaster (Fruit fly).